The following is a 138-amino-acid chain: Proofreading thioesterase EntH (138 aa).

The Nucleophile or proton acceptor role is filled by glutamate 64.

Belongs to the thioesterase PaaI family. In terms of assembly, homotetramer. Dimer of dimers. Interacts specifically with the aryl carrier protein (ArCP) domain of EntB.

The protein resides in the cytoplasm. The protein operates within siderophore biosynthesis; enterobactin biosynthesis. Its function is as follows. Required for optimal enterobactin synthesis. Acts as a proofreading enzyme that prevents EntB misacylation by hydrolyzing the thioester bound existing between EntB and wrongly charged molecules. The protein is Proofreading thioesterase EntH of Salmonella arizonae (strain ATCC BAA-731 / CDC346-86 / RSK2980).